The primary structure comprises 166 residues: MKCIKCGNMEDKVIDSRPIKEGKSIRRRRECLRCGYRFTTYEEVQEIELFVKKRNGSIEQFDRNKLMIGIQKALEKRPITQSQIEDFVDQIIEECSAEKSPIIPSFVIGTKVMNKLKTIDEVAFIRFASVYCKFHDAKDFMNVISELKMNEGPSKSVPMLLQASSK.

A zinc finger lies at 3-34 (CIKCGNMEDKVIDSRPIKEGKSIRRRRECLRC). The 91-residue stretch at 49-139 (LFVKKRNGSI…VYCKFHDAKD (91 aa)) folds into the ATP-cone domain.

This sequence belongs to the NrdR family. The cofactor is Zn(2+).

Functionally, negatively regulates transcription of bacterial ribonucleotide reductase nrd genes and operons by binding to NrdR-boxes. The sequence is that of Transcriptional repressor NrdR from Methylacidiphilum infernorum (isolate V4) (Methylokorus infernorum (strain V4)).